We begin with the raw amino-acid sequence, 335 residues long: Selenide, water dikinase (335 aa).

Sec7 is an active-site residue. Position 7 (Sec7) is a non-standard amino acid, selenocysteine. Residues Lys10 and 36–38 contribute to the ATP site; that span reads LGD. A Mg(2+)-binding site is contributed by Asp39. ATP-binding positions include Asp55, Asp78, and 126 to 128; that span reads GHT. Asp78 contacts Mg(2+). Asp232 lines the Mg(2+) pocket.

Belongs to the selenophosphate synthase 1 family. Class I subfamily. As to quaternary structure, homodimer. Mg(2+) serves as cofactor.

It catalyses the reaction hydrogenselenide + ATP + H2O = selenophosphate + AMP + phosphate + 2 H(+). In terms of biological role, synthesizes selenophosphate from selenide and ATP. This is Selenide, water dikinase from Methanococcus maripaludis (strain DSM 14266 / JCM 13030 / NBRC 101832 / S2 / LL).